Consider the following 140-residue polypeptide: Putative septation protein SpoVG (140 aa).

Residues 88–127 (VAPQAGGLQGAEEPTAVEPAPQLQDESELPWEPGDDGEGA) are disordered. Over residues 112 to 124 (DESELPWEPGDDG) the composition is skewed to acidic residues.

Belongs to the SpoVG family.

In terms of biological role, could be involved in septation. This is Putative septation protein SpoVG from Symbiobacterium thermophilum (strain DSM 24528 / JCM 14929 / IAM 14863 / T).